The primary structure comprises 273 residues: Tryptophan synthase alpha chain (273 aa).

Active-site proton acceptor residues include Glu-49 and Asp-60.

This sequence belongs to the TrpA family. Tetramer of two alpha and two beta chains.

It carries out the reaction (1S,2R)-1-C-(indol-3-yl)glycerol 3-phosphate + L-serine = D-glyceraldehyde 3-phosphate + L-tryptophan + H2O. The protein operates within amino-acid biosynthesis; L-tryptophan biosynthesis; L-tryptophan from chorismate: step 5/5. Functionally, the alpha subunit is responsible for the aldol cleavage of indoleglycerol phosphate to indole and glyceraldehyde 3-phosphate. The chain is Tryptophan synthase alpha chain from Thiobacillus denitrificans (strain ATCC 25259 / T1).